Here is an 877-residue protein sequence, read N- to C-terminus: Clumping factor B (877 aa).

Positions 1-44 (MKKRIDYLSNKQNKYSIRRFTVGTTSVIVGATILFGIGNHQAQA) are cleaved as a signal peptide. Residues 15-26 (YSIRRFTVGTTS) carry the YSIRK-G/S signaling motif motif. Composition is skewed to polar residues over residues 44-61 (ASEQ…NASA) and 68-95 (MIET…NVDS). The tract at residues 44–192 (ASEQSNDTTQ…QGTSKPSVRT (149 aa)) is disordered. Residues 45 to 542 (SEQSNDTTQS…GSADGDSAVN (498 aa)) form a ligand binding A region region. Residues 96–119 (TTKPMSTQTSNTTTTEPASTNETP) are compositionally biased toward low complexity. Over residues 120–189 (QPTAIKNQAT…SNAQGTSKPS (70 aa)) the composition is skewed to polar residues. An MIDAS-like motif motif is present at residues 272-276 (DYSNS). Residues 530–849 (YGGGSADGDS…ETGDKSENTN (320 aa)) are disordered. A compositionally biased stretch (pro residues) spans 545-555 (DPTPGPPVDPE). Acidic residues predominate over residues 556–801 (PSPDPEPEPT…SDSDSDSDSD (246 aa)). Polar residues predominate over residues 805-816 (RVTPPNNEQKAP). A compositionally biased stretch (basic and acidic residues) spans 833–846 (HKTDALPETGDKSE). The LPXTG sorting signal motif lies at 838 to 842 (LPETG). A Pentaglycyl murein peptidoglycan amidated threonine modification is found at Thr841. Positions 842 to 877 (GDKSENTNATLFGAMMALLGSLLLFRKRKQDHKEKA) are cleaved as a propeptide — removed by sortase.

The protein belongs to the serine-aspartate repeat-containing protein (SDr) family. Proteolytically cleaved by aureolysin (aur). This cleavage leads to the inactivation of ClfB.

Its subcellular location is the secreted. The protein resides in the cell wall. In terms of biological role, cell surface-associated protein implicated in virulence by promoting bacterial attachment to both alpha- and beta-chains of human fibrinogen and inducing the formation of bacterial clumps. Partly responsible for mediating bacterial attachment to the highly keratinized squamous epithelial cells from the nasal cavity via an interaction with cytokeratin K10 (K10). Also promotes bacterial attachment to cultured keratinocytes, possibly through an interaction with cytokeratin K10. Binds mouse cytokeratin K10. Activates human platelet aggregation. The sequence is that of Clumping factor B (clfB) from Staphylococcus aureus (strain NCTC 8325 / PS 47).